Consider the following 504-residue polypeptide: Anaerobic nitric oxide reductase transcription regulator NorR (504 aa).

4-aspartylphosphate is present on Asp57. Residues Met187 to Val416 form the Sigma-54 factor interaction domain. Residues Gly215–Glu222 and Ala278–Glu287 each bind ATP. A DNA-binding region (H-T-H motif) is located at residues Trp479–Lys498.

It functions in the pathway nitrogen metabolism; nitric oxide reduction. Its function is as follows. Required for the expression of anaerobic nitric oxide (NO) reductase, acts as a transcriptional activator for at least the norVW operon. Activation also requires sigma-54. In Shigella flexneri serotype 5b (strain 8401), this protein is Anaerobic nitric oxide reductase transcription regulator NorR.